A 108-amino-acid polypeptide reads, in one-letter code: Small ribosomal subunit protein bS6 (108 aa).

Belongs to the bacterial ribosomal protein bS6 family.

Binds together with bS18 to 16S ribosomal RNA. This chain is Small ribosomal subunit protein bS6, found in Nostoc sp. (strain PCC 7120 / SAG 25.82 / UTEX 2576).